The sequence spans 122 residues: Large ribosomal subunit protein bL12 (122 aa).

Positions 94 to 122 (GNVKEGLSKEDAEEMKEKLEEAGATVELK) are disordered. Positions 99–114 (GLSKEDAEEMKEKLEE) are enriched in basic and acidic residues.

The protein belongs to the bacterial ribosomal protein bL12 family. In terms of assembly, homodimer. Part of the ribosomal stalk of the 50S ribosomal subunit. Forms a multimeric L10(L12)X complex, where L10 forms an elongated spine to which 2 to 4 L12 dimers bind in a sequential fashion. Binds GTP-bound translation factors.

Forms part of the ribosomal stalk which helps the ribosome interact with GTP-bound translation factors. Is thus essential for accurate translation. The sequence is that of Large ribosomal subunit protein bL12 from Halanaerobium praevalens.